We begin with the raw amino-acid sequence, 248 residues long: Pyridoxine 5'-phosphate synthase (248 aa).

Asparagine 9 provides a ligand contact to 3-amino-2-oxopropyl phosphate. Residue aspartate 11–histidine 12 participates in 1-deoxy-D-xylulose 5-phosphate binding. Position 20 (arginine 20) interacts with 3-amino-2-oxopropyl phosphate. Histidine 45 functions as the Proton acceptor in the catalytic mechanism. Residues arginine 47 and histidine 52 each contribute to the 1-deoxy-D-xylulose 5-phosphate site. Catalysis depends on glutamate 72, which acts as the Proton acceptor. Threonine 102 contacts 1-deoxy-D-xylulose 5-phosphate. Residue histidine 193 is the Proton donor of the active site. 3-amino-2-oxopropyl phosphate is bound by residues glycine 194 and glycine 215–histidine 216.

Belongs to the PNP synthase family. As to quaternary structure, homooctamer; tetramer of dimers.

It localises to the cytoplasm. It carries out the reaction 3-amino-2-oxopropyl phosphate + 1-deoxy-D-xylulose 5-phosphate = pyridoxine 5'-phosphate + phosphate + 2 H2O + H(+). It participates in cofactor biosynthesis; pyridoxine 5'-phosphate biosynthesis; pyridoxine 5'-phosphate from D-erythrose 4-phosphate: step 5/5. Functionally, catalyzes the complicated ring closure reaction between the two acyclic compounds 1-deoxy-D-xylulose-5-phosphate (DXP) and 3-amino-2-oxopropyl phosphate (1-amino-acetone-3-phosphate or AAP) to form pyridoxine 5'-phosphate (PNP) and inorganic phosphate. This Hydrogenovibrio crunogenus (strain DSM 25203 / XCL-2) (Thiomicrospira crunogena) protein is Pyridoxine 5'-phosphate synthase.